A 700-amino-acid polypeptide reads, in one-letter code: Elongation factor G (700 aa).

Positions 10–286 (KKVRNIGIMA…AVIDYLPSPL (277 aa)) constitute a tr-type G domain. Residues 19 to 26 (AHIDAGKT), 83 to 87 (DTPGH), and 137 to 140 (NKMD) contribute to the GTP site.

The protein belongs to the TRAFAC class translation factor GTPase superfamily. Classic translation factor GTPase family. EF-G/EF-2 subfamily.

The protein resides in the cytoplasm. Catalyzes the GTP-dependent ribosomal translocation step during translation elongation. During this step, the ribosome changes from the pre-translocational (PRE) to the post-translocational (POST) state as the newly formed A-site-bound peptidyl-tRNA and P-site-bound deacylated tRNA move to the P and E sites, respectively. Catalyzes the coordinated movement of the two tRNA molecules, the mRNA and conformational changes in the ribosome. This Nocardia farcinica (strain IFM 10152) protein is Elongation factor G.